A 147-amino-acid polypeptide reads, in one-letter code: Nucleoside diphosphate kinase (147 aa).

Positions 9, 57, 85, 91, 102, and 112 each coordinate ATP. The active-site Pros-phosphohistidine intermediate is the histidine 115.

Belongs to the NDK family. In terms of assembly, homotetramer. Mg(2+) serves as cofactor.

It localises to the cytoplasm. The enzyme catalyses a 2'-deoxyribonucleoside 5'-diphosphate + ATP = a 2'-deoxyribonucleoside 5'-triphosphate + ADP. It carries out the reaction a ribonucleoside 5'-diphosphate + ATP = a ribonucleoside 5'-triphosphate + ADP. Its function is as follows. Major role in the synthesis of nucleoside triphosphates other than ATP. The ATP gamma phosphate is transferred to the NDP beta phosphate via a ping-pong mechanism, using a phosphorylated active-site intermediate. The chain is Nucleoside diphosphate kinase from Thermosipho africanus (strain TCF52B).